Here is a 115-residue protein sequence, read N- to C-terminus: uncharacterized protein (115 aa).

In terms of domain architecture, CHCH spans 63 to 108 (GSPCGFEFREAITCQKTNSDGEIEQGACGKELMSFMECVTRTQCFG). 2 short sequence motifs (cx9C motif) span residues 66-76 (CGFEFREAITC) and 90-100 (CGKELMSFMEC). Disulfide bonds link Cys66/Cys100 and Cys76/Cys90.

This is an uncharacterized protein from Caenorhabditis elegans.